The sequence spans 502 residues: Galactose/methyl galactoside import ATP-binding protein MglA (502 aa).

ABC transporter domains are found at residues leucine 10–glutamate 245 and asparagine 255–leucine 502. Residue glycine 42–serine 49 participates in ATP binding.

This sequence belongs to the ABC transporter superfamily. Galactose/methyl galactoside importer (TC 3.A.1.2.3) family. In terms of assembly, the complex is composed of one ATP-binding protein (MglA), two transmembrane proteins (MglC) and a solute-binding protein (MglB).

It is found in the cell inner membrane. It catalyses the reaction D-galactose(out) + ATP + H2O = D-galactose(in) + ADP + phosphate + H(+). It carries out the reaction methyl beta-D-galactoside(out) + ATP + H2O = methyl beta-D-galactoside(in) + ADP + phosphate + H(+). In terms of biological role, part of the ABC transporter complex MglABC involved in galactose/methyl galactoside import. Responsible for energy coupling to the transport system. This Vibrio vulnificus (strain CMCP6) protein is Galactose/methyl galactoside import ATP-binding protein MglA.